Consider the following 485-residue polypeptide: Glutamyl-tRNA(Gln) amidotransferase subunit A (485 aa).

Residues K76 and S151 each act as charge relay system in the active site. The Acyl-ester intermediate role is filled by S175.

Belongs to the amidase family. GatA subfamily. In terms of assembly, heterotrimer of A, B and C subunits.

It catalyses the reaction L-glutamyl-tRNA(Gln) + L-glutamine + ATP + H2O = L-glutaminyl-tRNA(Gln) + L-glutamate + ADP + phosphate + H(+). Functionally, allows the formation of correctly charged Gln-tRNA(Gln) through the transamidation of misacylated Glu-tRNA(Gln) in organisms which lack glutaminyl-tRNA synthetase. The reaction takes place in the presence of glutamine and ATP through an activated gamma-phospho-Glu-tRNA(Gln). The polypeptide is Glutamyl-tRNA(Gln) amidotransferase subunit A (Methylococcus capsulatus (strain ATCC 33009 / NCIMB 11132 / Bath)).